Reading from the N-terminus, the 475-residue chain is uncharacterized protein (475 aa).

The tract at residues 42–292 is disordered; the sequence is NLQNSLTGKT…NTRKGQRHNN (251 aa). 2 stretches are compositionally biased toward basic and acidic residues: residues 59 to 72 and 119 to 134; these read EANH…KSED and IAEK…DDSQ. 2 stretches are compositionally biased toward polar residues: residues 150–159 and 220–242; these read ITPNFTHTPI and NNTF…TSED. A compositionally biased stretch (low complexity) spans 243–263; the sequence is SSSQAPHHSSSSGHAPSQQGG. Residues 277-289 are compositionally biased toward basic residues; it reads FHHKGRNTRKGQR. Residues 319–408 form the HTH La-type RNA-binding domain; that stretch reads NPYLCDVQAF…MSIKVRRKET (90 aa). Thr-408 bears the Phosphothreonine mark. Ser-410 carries the post-translational modification Phosphoserine.

The protein localises to the cytoplasm. This is an uncharacterized protein from Schizosaccharomyces pombe (strain 972 / ATCC 24843) (Fission yeast).